The sequence spans 148 residues: ATP synthase epsilon chain (148 aa).

It belongs to the ATPase epsilon chain family. F-type ATPases have 2 components, CF(1) - the catalytic core - and CF(0) - the membrane proton channel. CF(1) has five subunits: alpha(3), beta(3), gamma(1), delta(1), epsilon(1). CF(0) has three main subunits: a, b and c.

The protein resides in the cell inner membrane. Produces ATP from ADP in the presence of a proton gradient across the membrane. This Paracoccus denitrificans (strain Pd 1222) protein is ATP synthase epsilon chain.